A 93-amino-acid chain; its full sequence is Small ribosomal subunit protein uS19c (93 aa).

This sequence belongs to the universal ribosomal protein uS19 family.

It is found in the plastid. The protein localises to the chloroplast. In terms of biological role, protein S19 forms a complex with S13 that binds strongly to the 16S ribosomal RNA. In Zygnema circumcarinatum (Green alga), this protein is Small ribosomal subunit protein uS19c.